The primary structure comprises 47 residues: UPF0391 membrane protein rrnAC2507 (47 aa).

2 helical membrane-spanning segments follow: residues 5-25 (VVLV…IAGL) and 27-47 (FRVA…TFLL).

This sequence belongs to the UPF0391 family.

The protein resides in the cell membrane. This Haloarcula marismortui (strain ATCC 43049 / DSM 3752 / JCM 8966 / VKM B-1809) (Halobacterium marismortui) protein is UPF0391 membrane protein rrnAC2507.